The chain runs to 2091 residues: Protein Ycf2 (2091 aa).

The interval 191-210 (DSSQLKGSSDQSRDPLDSIS) is disordered. 1432–1439 (GSIGTGRS) serves as a coordination point for ATP.

This sequence belongs to the Ycf2 family.

It is found in the plastid. Its subcellular location is the chloroplast stroma. In terms of biological role, probable ATPase of unknown function. Its presence in a non-photosynthetic plant (Epifagus virginiana) and experiments in tobacco indicate that it has an essential function which is probably not related to photosynthesis. The chain is Protein Ycf2 from Daucus carota (Wild carrot).